A 2541-amino-acid polypeptide reads, in one-letter code: Talin-1 (2541 aa).

An FERM domain is found at 86–403 (RPLKIRMLDG…GYIDIILKKK (318 aa)). Thr167 carries the phosphothreonine modification. The tract at residues 280 to 435 (FQAHKNCGQM…PKKSTVLQQQ (156 aa)) is interaction with LAYN. Residues Ser405, Ser425, Ser446, Ser620, and Ser729 each carry the phosphoserine modification. Positions 482-655 (RGHMPPLTSA…QASGELLQQI (174 aa)) are helical bundle R1. Positions 656 to 786 (GESDTDPHFQ…ALNELLQHVK (131 aa)) are helical bundle R2. The helical bundle R3 stretch occupies residues 787–911 (AHATGAGPAG…NAAAQNAIKK (125 aa)). The interval 913-1044 (LVQRLEHAAK…RTAAQKAQEA (132 aa)) is helical bundle R4. The residue at position 1021 (Ser1021) is a Phosphoserine. Residues 1046-1206 (GPLEMDSALS…NRCVSCLPGQ (161 aa)) are helical bundle R5. Residue Tyr1116 is modified to Phosphotyrosine. At Thr1142 the chain carries Phosphothreonine. Phosphoserine occurs at positions 1201 and 1225. Positions 1207–1357 (RDVDNALRAV…QLITMCTQQA (151 aa)) are helical bundle R6. The residue at position 1263 (Thr1263) is a Phosphothreonine. 2 positions are modified to phosphoserine: Ser1323 and Ser1328. The tract at residues 1327–1948 (ASPNLKSQLA…CSPSDVYTKK (622 aa)) is interaction with SYNM. Residues 1358–1453 (PGQKECDNAL…AYLVGVSDPN (96 aa)) form a helical bundle R7A; Interaction with KANK1 region. The interaction with VCL and F-actin stretch occupies residues 1359-1659 (GQKECDNALR…SMRDKAPGQL (301 aa)). Positions 1461–1580 (LVEPTQFARA…NLSAFASNPE (120 aa)) are helical bundle R8. Lys1544 carries the N6-acetyllysine modification. The helical bundle R7B; Interaction with KANK1 stretch occupies residues 1581 to 1653 (FSSVPAQISP…IKKLITSMRD (73 aa)). The segment at 1655 to 1822 (APGQLECETA…TLNEAASAAG (168 aa)) is helical bundle R9. The helical bundle R10 stretch occupies residues 1823–1973 (VVGGMVDSIT…VLAALQAGNR (151 aa)). Ser1849 is modified (phosphoserine). Thr1855 carries the post-translational modification Phosphothreonine. Position 1878 is a phosphoserine (Ser1878). Positions 1974–2140 (GTQACITAAS…TVKAVEDEAT (167 aa)) are helical bundle R11. Position 2031 is an N6-acetyllysine (Lys2031). The residue at position 2040 (Ser2040) is a Phosphoserine. An N6-acetyllysine modification is found at Lys2115. Residues 2141-2294 (KGTRALEATT…QAAEAMKGTE (154 aa)) form a helical bundle R12 region. Residues 2293 to 2533 (TEWVDPEDPT…QIRQQQYKFL (241 aa)) enclose the I/LWEQ domain. Residues 2300–2482 (DPTVIAENEL…AAQKAAAFED (183 aa)) form a helical bundle R13 region.

In terms of assembly, part of a complex composed of THSD1, PTK2/FAK1, TLN1 and VCL. Interacts with THSD1; this promotes interaction with PTK2/FAK1 and VCL. Interacts with NRAP and LAYN. Interacts with SYNM. Interacts with ITGB1; the interaction is prevented by competitive binding of ITGB1BP1. Binds with high affinity to VCL and with low affinity to integrins. Interacts with APBB1IP; this inhibits VCL binding. Interacts with PTK2/FAK1. Interacts with PIP5K1C. Interacts with F-actin. Interacts with SVEP1. Interacts (via R7 domain) with KANK1 or KANK2 (via KN motif); this interaction likely initiates the assembly of cortical microtubule stabilization complexes (CMSCs) at the vicinity of focal adhesions.

Its subcellular location is the cell projection. The protein resides in the ruffle membrane. It is found in the cytoplasm. It localises to the cytoskeleton. The protein localises to the cell surface. Its subcellular location is the cell junction. The protein resides in the focal adhesion. High molecular weight cytoskeletal protein concentrated at regions of cell-matrix and cell-cell contacts. Involved in connections of major cytoskeletal structures to the plasma membrane. With KANK1 co-organize the assembly of cortical microtubule stabilizing complexes (CMSCs) positioned to control microtubule-actin crosstalk at focal adhesions (FAs) rims. The protein is Talin-1 (Tln1) of Mus musculus (Mouse).